The sequence spans 352 residues: 3-isopropylmalate dehydrogenase (352 aa).

Arg96, Arg106, Arg134, and Asp220 together coordinate substrate. 3 residues coordinate Mg(2+): Asp220, Asp244, and Asp248. 277–289 serves as a coordination point for NAD(+); it reads GSAPDIAGKNLAN.

The protein belongs to the isocitrate and isopropylmalate dehydrogenases family. LeuB type 1 subfamily. In terms of assembly, homodimer. Requires Mg(2+) as cofactor. Mn(2+) serves as cofactor.

Its subcellular location is the cytoplasm. It catalyses the reaction (2R,3S)-3-isopropylmalate + NAD(+) = 4-methyl-2-oxopentanoate + CO2 + NADH. It functions in the pathway amino-acid biosynthesis; L-leucine biosynthesis; L-leucine from 3-methyl-2-oxobutanoate: step 3/4. Catalyzes the oxidation of 3-carboxy-2-hydroxy-4-methylpentanoate (3-isopropylmalate) to 3-carboxy-4-methyl-2-oxopentanoate. The product decarboxylates to 4-methyl-2 oxopentanoate. This Desulfitobacterium hafniense (strain Y51) protein is 3-isopropylmalate dehydrogenase.